The chain runs to 88 residues: Large ribosomal subunit protein bL27 (88 aa).

This sequence belongs to the bacterial ribosomal protein bL27 family.

This chain is Large ribosomal subunit protein bL27, found in Acidobacterium capsulatum (strain ATCC 51196 / DSM 11244 / BCRC 80197 / JCM 7670 / NBRC 15755 / NCIMB 13165 / 161).